The primary structure comprises 675 residues: Putative elongation factor TypA-like SVR3, chloroplastic (675 aa).

The N-terminal 58 residues, methionine 1–cysteine 58, are a transit peptide targeting the chloroplast. The segment at alanine 43 to leucine 76 is disordered. Positions serine 59–alanine 68 are enriched in low complexity. The tr-type G domain maps to aspartate 80–asparagine 275.

Belongs to the TRAFAC class translation factor GTPase superfamily. Classic translation factor GTPase family. BipA subfamily.

The protein resides in the plastid. The protein localises to the chloroplast. Functionally, putative chloroplastic elongation factor involved in response to chilling stress. Required for proper chloroplast rRNA processing and/or translation at low temperature. Involved in plastid protein homeostasis. The protein is Putative elongation factor TypA-like SVR3, chloroplastic (SVR3) of Arabidopsis thaliana (Mouse-ear cress).